The chain runs to 298 residues: Apolipoprotein E (298 aa).

Residues 1–18 (MKILWAALVLTLLAGCRA) form the signal peptide. 6 tandem repeats follow at residues 74-95 (LLMEDTMKELKAYKSELEKEVG), 96-117 (PMAEDTKARLSKELQGAQARLA), 118-139 (GDMEEVRNRLSQYRSEVQAMLG), 140-161 (QSSEELRARLASHLRKLRKRLQ), 162-183 (RDAEELQKRLAVYKAGAQEGAE), and 223-244 (GRLEKVGSQARDRLEEVREQME). The tract at residues 74 to 244 (LLMEDTMKEL…RLEEVREQME (171 aa)) is 8 X 22 AA approximate tandem repeats. Met137 carries the post-translational modification Methionine sulfoxide. A Phosphoserine modification is found at Ser141. The tract at residues 152-162 (HLRKLRKRLQR) is LDL and other lipoprotein receptors binding. Residue 156-159 (LRKR) participates in heparin binding. Positions 204–272 (ALTSHPLRER…SWFEPMVEDL (69 aa)) are lipid-binding and lipoprotein association. 218 to 225 (GEQVRGRL) contacts heparin. The tract at residues 260–272 (RLKSWFEPMVEDL) is specificity for association with VLDL.

This sequence belongs to the apolipoprotein A1/A4/E family. As to quaternary structure, homotetramer. May interact with ABCA1; functionally associated with ABCA1 in the biogenesis of HDLs. May interact with APP/A4 amyloid-beta peptide; the interaction is extremely stable in vitro but its physiological significance is unclear. May interact with MAPT. May interact with MAP2. In the cerebrospinal fluid, interacts with secreted SORL1. Interacts with PMEL; this allows the loading of PMEL luminal fragment on ILVs to induce fibril nucleation. APOE exists as multiple glycosylated and sialylated glycoforms within cells and in plasma. The extent of glycosylation and sialylation are tissue and context specific. In terms of processing, glycated in plasma VLDL. Post-translationally, phosphorylated by FAM20C in the extracellular medium.

It localises to the secreted. It is found in the extracellular space. Its subcellular location is the extracellular matrix. The protein localises to the extracellular vesicle. The protein resides in the endosome. It localises to the multivesicular body. In terms of biological role, APOE is an apolipoprotein, a protein associating with lipid particles, that mainly functions in lipoprotein-mediated lipid transport between organs via the plasma and interstitial fluids. APOE is a core component of plasma lipoproteins and is involved in their production, conversion and clearance. Apolipoproteins are amphipathic molecules that interact both with lipids of the lipoprotein particle core and the aqueous environment of the plasma. As such, APOE associates with chylomicrons, chylomicron remnants, very low density lipoproteins (VLDL) and intermediate density lipoproteins (IDL) but shows a preferential binding to high-density lipoproteins (HDL). It also binds a wide range of cellular receptors including the LDL receptor/LDLR, the LDL receptor-related proteins LRP1, LRP2 and LRP8 and the very low-density lipoprotein receptor/VLDLR that mediate the cellular uptake of the APOE-containing lipoprotein particles. Finally, APOE also has a heparin-binding activity and binds heparan-sulfate proteoglycans on the surface of cells, a property that supports the capture and the receptor-mediated uptake of APOE-containing lipoproteins by cells. A main function of APOE is to mediate lipoprotein clearance through the uptake of chylomicrons, VLDLs, and HDLs by hepatocytes. APOE is also involved in the biosynthesis by the liver of VLDLs as well as their uptake by peripheral tissues ensuring the delivery of triglycerides and energy storage in muscle, heart and adipose tissues. By participating in the lipoprotein-mediated distribution of lipids among tissues, APOE plays a critical role in plasma and tissues lipid homeostasis. APOE is also involved in two steps of reverse cholesterol transport, the HDLs-mediated transport of cholesterol from peripheral tissues to the liver, and thereby plays an important role in cholesterol homeostasis. First, it is functionally associated with ABCA1 in the biogenesis of HDLs in tissues. Second, it is enriched in circulating HDLs and mediates their uptake by hepatocytes. APOE also plays an important role in lipid transport in the central nervous system, regulating neuron survival and sprouting. In Hydrochoerus hydrochaeris (Capybara), this protein is Apolipoprotein E (APOE).